The chain runs to 211 residues: tRNA (guanine-N(7)-)-methyltransferase (211 aa).

4 residues coordinate S-adenosyl-L-methionine: Glu-43, Asp-68, Asn-95, and Asn-117. Substrate-binding positions include Lys-121, Asp-153, and 190–193 (TEYE).

The protein belongs to the class I-like SAM-binding methyltransferase superfamily. TrmB family.

It catalyses the reaction guanosine(46) in tRNA + S-adenosyl-L-methionine = N(7)-methylguanosine(46) in tRNA + S-adenosyl-L-homocysteine. It participates in tRNA modification; N(7)-methylguanine-tRNA biosynthesis. Functionally, catalyzes the formation of N(7)-methylguanine at position 46 (m7G46) in tRNA. The sequence is that of tRNA (guanine-N(7)-)-methyltransferase from Clostridium kluyveri (strain ATCC 8527 / DSM 555 / NBRC 12016 / NCIMB 10680 / K1).